Here is a 408-residue protein sequence, read N- to C-terminus: Peptidase T (408 aa).

His-78 contributes to the Zn(2+) binding site. Asp-80 is a catalytic residue. Zn(2+) is bound at residue Asp-140. Catalysis depends on Glu-174, which acts as the Proton acceptor. Zn(2+)-binding residues include Glu-175, Asp-197, and His-379.

Belongs to the peptidase M20B family. The cofactor is Zn(2+).

It is found in the cytoplasm. It carries out the reaction Release of the N-terminal residue from a tripeptide.. Its function is as follows. Cleaves the N-terminal amino acid of tripeptides. This chain is Peptidase T, found in Staphylococcus aureus (strain Mu3 / ATCC 700698).